Here is a 39-residue protein sequence, read N- to C-terminus: Cytochrome b559 subunit beta (39 aa).

A helical transmembrane segment spans residues 14 to 30; the sequence is WLAIHGLAVPTVFFLGS. H18 serves as a coordination point for heme.

The protein belongs to the PsbE/PsbF family. As to quaternary structure, heterodimer of an alpha subunit and a beta subunit. PSII is composed of 1 copy each of membrane proteins PsbA, PsbB, PsbC, PsbD, PsbE, PsbF, PsbH, PsbI, PsbJ, PsbK, PsbL, PsbM, PsbT, PsbX, PsbY, PsbZ, Psb30/Ycf12, at least 3 peripheral proteins of the oxygen-evolving complex and a large number of cofactors. It forms dimeric complexes. It depends on heme b as a cofactor.

Its subcellular location is the plastid. It localises to the chloroplast thylakoid membrane. Its function is as follows. This b-type cytochrome is tightly associated with the reaction center of photosystem II (PSII). PSII is a light-driven water:plastoquinone oxidoreductase that uses light energy to abstract electrons from H(2)O, generating O(2) and a proton gradient subsequently used for ATP formation. It consists of a core antenna complex that captures photons, and an electron transfer chain that converts photonic excitation into a charge separation. This Staurastrum punctulatum (Green alga) protein is Cytochrome b559 subunit beta.